Reading from the N-terminus, the 266-residue chain is Undecaprenyl-diphosphatase (266 aa).

A run of 7 helical transmembrane segments spans residues 41-61 (YAYS…LIYF), 82-102 (LVYI…LYYV), 106-126 (WLVV…AVVL), 159-179 (AVSV…LLLL), 191-211 (FVLV…SEGG), 213-233 (VATA…IITI), and 246-266 (VLVN…RIIF).

This sequence belongs to the UppP family.

Its subcellular location is the cell membrane. It carries out the reaction di-trans,octa-cis-undecaprenyl diphosphate + H2O = di-trans,octa-cis-undecaprenyl phosphate + phosphate + H(+). In terms of biological role, catalyzes the dephosphorylation of undecaprenyl diphosphate (UPP). This is Undecaprenyl-diphosphatase from Pyrobaculum aerophilum (strain ATCC 51768 / DSM 7523 / JCM 9630 / CIP 104966 / NBRC 100827 / IM2).